The sequence spans 340 residues: Beta-ketoacyl-[acyl-carrier-protein] synthase III (340 aa).

Catalysis depends on residues C122 and H260. Residues Q261–R265 form an ACP-binding region. N291 is a catalytic residue.

This sequence belongs to the thiolase-like superfamily. FabH family. In terms of assembly, homodimer.

The protein localises to the cytoplasm. It catalyses the reaction malonyl-[ACP] + acetyl-CoA + H(+) = 3-oxobutanoyl-[ACP] + CO2 + CoA. It functions in the pathway lipid metabolism; fatty acid biosynthesis. Catalyzes the condensation reaction of fatty acid synthesis by the addition to an acyl acceptor of two carbons from malonyl-ACP. Catalyzes the first condensation reaction which initiates fatty acid synthesis and may therefore play a role in governing the total rate of fatty acid production. Possesses both acetoacetyl-ACP synthase and acetyl transacylase activities. Its substrate specificity determines the biosynthesis of branched-chain and/or straight-chain of fatty acids. The chain is Beta-ketoacyl-[acyl-carrier-protein] synthase III from Mycobacteroides abscessus (strain ATCC 19977 / DSM 44196 / CCUG 20993 / CIP 104536 / JCM 13569 / NCTC 13031 / TMC 1543 / L948) (Mycobacterium abscessus).